The sequence spans 657 residues: Endoplasmic reticulum mannosyl-oligosaccharide 1,2-alpha-mannosidase (657 aa).

The Cytoplasmic portion of the chain corresponds to Met-1 to Asn-49. The chain crosses the membrane as a helical span at residues Val-50 to Ser-70. The Lumenal segment spans residues Asp-71–Ala-657. Ser-101 carries the phosphoserine modification. The interval His-118 to Glu-157 is disordered. Positions Gly-138–Glu-157 are enriched in basic and acidic residues. Glu-288 serves as the catalytic Proton donor. Asp-421 is a catalytic residue. Cys-485 and Cys-514 are disulfide-bonded. The Proton donor role is filled by Glu-528. Glu-557 is an active-site residue. Thr-646 lines the Ca(2+) pocket.

Belongs to the glycosyl hydrolase 47 family. Ca(2+) is required as a cofactor.

The protein localises to the endoplasmic reticulum membrane. It carries out the reaction N(4)-(alpha-D-Man-(1-&gt;2)-alpha-D-Man-(1-&gt;2)-alpha-D-Man-(1-&gt;3)-[alpha-D-Man-(1-&gt;2)-alpha-D-Man-(1-&gt;3)-[alpha-D-Man-(1-&gt;2)-alpha-D-Man-(1-&gt;6)]-alpha-D-Man-(1-&gt;6)]-beta-D-Man-(1-&gt;4)-beta-D-GlcNAc-(1-&gt;4)-beta-D-GlcNAc)-L-asparaginyl-[protein] (N-glucan mannose isomer 9A1,2,3B1,2,3) + 4 H2O = N(4)-(alpha-D-Man-(1-&gt;3)-[alpha-D-Man-(1-&gt;3)-[alpha-D-Man-(1-&gt;6)]-alpha-D-Man-(1-&gt;6)]-beta-D-Man-(1-&gt;4)-beta-D-GlcNAc-(1-&gt;4)-beta-D-GlcNAc)-L-asparaginyl-[protein] (N-glucan mannose isomer 5A1,2) + 4 beta-D-mannose. The catalysed reaction is N(4)-(alpha-D-Man-(1-&gt;2)-alpha-D-Man-(1-&gt;2)-alpha-D-Man-(1-&gt;3)-[alpha-D-Man-(1-&gt;3)-[alpha-D-Man-(1-&gt;2)-alpha-D-Man-(1-&gt;6)]-alpha-D-Man-(1-&gt;6)]-beta-D-Man-(1-&gt;4)-beta-D-GlcNAc-(1-&gt;4)-beta-D-GlcNAc)-L-asparaginyl-[protein] (N-glucan mannose isomer 8A1,2,3B1,3) + 3 H2O = N(4)-(alpha-D-Man-(1-&gt;3)-[alpha-D-Man-(1-&gt;3)-[alpha-D-Man-(1-&gt;6)]-alpha-D-Man-(1-&gt;6)]-beta-D-Man-(1-&gt;4)-beta-D-GlcNAc-(1-&gt;4)-beta-D-GlcNAc)-L-asparaginyl-[protein] (N-glucan mannose isomer 5A1,2) + 3 beta-D-mannose. It functions in the pathway protein modification; protein glycosylation. In terms of biological role, involved in glycoprotein quality control targeting of misfolded glycoproteins for degradation. It primarily trims a single alpha-1,2-linked mannose residue from Man(9)GlcNAc(2) to produce Man(8)GlcNAc(2), but at high enzyme concentrations, as found in the ER quality control compartment (ERQC), it further trims the carbohydrates to Man(5-6)GlcNAc(2). In Rattus norvegicus (Rat), this protein is Endoplasmic reticulum mannosyl-oligosaccharide 1,2-alpha-mannosidase (Man1b1).